Reading from the N-terminus, the 201-residue chain is Orotate phosphoribosyltransferase (201 aa).

Position 113–121 (113–121) interacts with 5-phospho-alpha-D-ribose 1-diphosphate; that stretch reads EDIITTGKS. The orotate site is built by Thr117 and Arg145.

This sequence belongs to the purine/pyrimidine phosphoribosyltransferase family. PyrE subfamily. In terms of assembly, homodimer. Requires Mg(2+) as cofactor.

It carries out the reaction orotidine 5'-phosphate + diphosphate = orotate + 5-phospho-alpha-D-ribose 1-diphosphate. Its pathway is pyrimidine metabolism; UMP biosynthesis via de novo pathway; UMP from orotate: step 1/2. In terms of biological role, catalyzes the transfer of a ribosyl phosphate group from 5-phosphoribose 1-diphosphate to orotate, leading to the formation of orotidine monophosphate (OMP). The protein is Orotate phosphoribosyltransferase of Helicobacter pylori (strain HPAG1).